Here is a 400-residue protein sequence, read N- to C-terminus: Acetate kinase (400 aa).

N10 is a Mg(2+) binding site. Residue K17 coordinates ATP. R91 contributes to the substrate binding site. The Proton donor/acceptor role is filled by D150. ATP contacts are provided by residues 210 to 214, 285 to 287, and 333 to 337; these read HLGNG, DCR, and GIGEN. E387 contacts Mg(2+).

Belongs to the acetokinase family. Homodimer. The cofactor is Mg(2+). Mn(2+) is required as a cofactor.

It is found in the cytoplasm. The enzyme catalyses acetate + ATP = acetyl phosphate + ADP. It participates in metabolic intermediate biosynthesis; acetyl-CoA biosynthesis; acetyl-CoA from acetate: step 1/2. Its function is as follows. Catalyzes the formation of acetyl phosphate from acetate and ATP. Can also catalyze the reverse reaction. This is Acetate kinase from Yersinia pseudotuberculosis serotype IB (strain PB1/+).